A 36-amino-acid chain; its full sequence is U14-myrmicitoxin-Tb1a (36 aa).

The signal sequence occupies residues 1-23 (MKIIKLITIFTMMATLMXXVANG). Residues 24–25 (EP) constitute a propeptide that is removed on maturation. Q35 carries the post-translational modification Glutamine amide.

Expressed by the venom gland.

Its subcellular location is the secreted. Its function is as follows. Venom protein with unknown function. Does not induce paralysis when a high dose is administered by intrathoracic injection into the blowfly Lucilia caesar. This is U14-myrmicitoxin-Tb1a from Tetramorium bicarinatum (Tramp ant).